We begin with the raw amino-acid sequence, 733 residues long: E3 ubiquitin-protein ligase COP1 (733 aa).

Residues 1–43 (MSGSRQAGSGSAGTSPGSSAASSVTSASSSLSSSPSPPSVAAS) are disordered. Residues 111–115 (SSRKR) carry the Nuclear localization signal 1 motif. The RING-type zinc finger occupies 138 to 176 (CPICFDMIEEAYMTKCGHSFCYKCIHQSLEDNNRCPKCN). The Nuclear localization signal 2 motif lies at 197 to 208 (KQKQRFEEKRFK). Residues 231-306 (DQDNLDLANV…RVEEMSGLYS (76 aa)) adopt a coiled-coil conformation. The short motif at 237–247 (LANVNLMLELL) is the Nuclear export signal element. The tract at residues 307-327 (PVSEDSTVPQFEAPSPSHSSI) is disordered. 7 WD repeats span residues 421 to 460 (NGSS…QDAV), 470 to 510 (TCNS…RSKV), 513 to 553 (EHEK…SVAS), 555 to 595 (EAKA…QPIM), 599 to 637 (GHRK…CLRS), 640 to 679 (GHIN…TLLT), and 695 to 731 (EDDT…KVLE). An interaction with TRIB1 region spans residues 645–647 (KNF).

It belongs to the COP1 family. Homodimer. Homodimerization is mediated by the coiled coil domain. Component of the DCX DET1-COP1 ubiquitin ligase complex at least composed of RBX1, DET1, DDB1, CUL4A and COP1. Isoform 2 does not interact with CUL4A but still binds to RBX1, suggesting that the interaction may be mediated by another cullin protein. Isoform 1 and isoform 2 interact with CUL5 but not with CUL1, CUL2 not CUL3. Interacts with bZIP transcription factors JUN, JUNB and JUND but not with FOS, ATF2 nor XBP1. Interacts with p53 (TP53). Interacts with COPS6; this interaction stabilizes RFWD2 through reducing its auto-ubiquitination and decelerating its turnover rate. Interacts with SFN; this interaction leads to SFN degradation. Interacts with p53/TP53 and MTA1. Interacts with TRIB1 (via C-terminus) and TRIB2.

It is found in the nucleus speckle. Its subcellular location is the cytoplasm. It carries out the reaction S-ubiquitinyl-[E2 ubiquitin-conjugating enzyme]-L-cysteine + [acceptor protein]-L-lysine = [E2 ubiquitin-conjugating enzyme]-L-cysteine + N(6)-ubiquitinyl-[acceptor protein]-L-lysine.. The protein operates within protein modification; protein ubiquitination. Its activity is regulated as follows. TRIB1 competes with substrates for RFWD2 binding. E3 ubiquitin-protein ligase that mediates ubiquitination and subsequent proteasomal degradation of target proteins. E3 ubiquitin ligases accept ubiquitin from an E2 ubiquitin-conjugating enzyme in the form of a thioester and then directly transfers the ubiquitin to targeted substrates. Involved in JUN ubiquitination and degradation. Directly involved in p53 (TP53) ubiquitination and degradation, thereby abolishing p53-dependent transcription and apoptosis. Ubiquitinates p53 independently of MDM2 or RCHY1. Probably mediates E3 ubiquitin ligase activity by functioning as the essential RING domain subunit of larger E3 complexes. In contrast, it does not constitute the catalytic RING subunit in the DCX DET1-COP1 complex that negatively regulates JUN, the ubiquitin ligase activity being mediated by RBX1. Involved in 14-3-3 protein sigma/SFN ubiquitination and proteasomal degradation, leading to AKT activation and promotion of cell survival. Ubiquitinates MTA1 leading to its proteasomal degradation. Upon binding to TRIB1, ubiquitinates CEBPA, which lacks a canonical COP1-binding motif. In Mus musculus (Mouse), this protein is E3 ubiquitin-protein ligase COP1.